Here is a 108-residue protein sequence, read N- to C-terminus: Putative transmembrane protein ORF108 (108 aa).

3 helical membrane-spanning segments follow: residues 11 to 31 (FIMG…SSII), 33 to 53 (IAMT…TVHF), and 69 to 89 (VGFL…LLII).

It localises to the host membrane. The sequence is that of Putative transmembrane protein ORF108 from Acidianus hospitalis (AFV-1).